The chain runs to 492 residues: Aspartyl/glutamyl-tRNA(Asn/Gln) amidotransferase subunit B (492 aa).

This sequence belongs to the GatB/GatE family. GatB subfamily. In terms of assembly, heterotrimer of A, B and C subunits.

The catalysed reaction is L-glutamyl-tRNA(Gln) + L-glutamine + ATP + H2O = L-glutaminyl-tRNA(Gln) + L-glutamate + ADP + phosphate + H(+). It carries out the reaction L-aspartyl-tRNA(Asn) + L-glutamine + ATP + H2O = L-asparaginyl-tRNA(Asn) + L-glutamate + ADP + phosphate + 2 H(+). Allows the formation of correctly charged Asn-tRNA(Asn) or Gln-tRNA(Gln) through the transamidation of misacylated Asp-tRNA(Asn) or Glu-tRNA(Gln) in organisms which lack either or both of asparaginyl-tRNA or glutaminyl-tRNA synthetases. The reaction takes place in the presence of glutamine and ATP through an activated phospho-Asp-tRNA(Asn) or phospho-Glu-tRNA(Gln). The polypeptide is Aspartyl/glutamyl-tRNA(Asn/Gln) amidotransferase subunit B (Azorhizobium caulinodans (strain ATCC 43989 / DSM 5975 / JCM 20966 / LMG 6465 / NBRC 14845 / NCIMB 13405 / ORS 571)).